The sequence spans 697 residues: Elongation factor G (697 aa).

Positions 10 to 285 (AKTRNIGIMA…GVIDYLPSPL (276 aa)) constitute a tr-type G domain. GTP is bound by residues 19 to 26 (AHIDAGKT), 83 to 87 (DTPGH), and 137 to 140 (NKMD).

It belongs to the TRAFAC class translation factor GTPase superfamily. Classic translation factor GTPase family. EF-G/EF-2 subfamily.

Its subcellular location is the cytoplasm. Its function is as follows. Catalyzes the GTP-dependent ribosomal translocation step during translation elongation. During this step, the ribosome changes from the pre-translocational (PRE) to the post-translocational (POST) state as the newly formed A-site-bound peptidyl-tRNA and P-site-bound deacylated tRNA move to the P and E sites, respectively. Catalyzes the coordinated movement of the two tRNA molecules, the mRNA and conformational changes in the ribosome. The chain is Elongation factor G from Lactobacillus acidophilus (strain ATCC 700396 / NCK56 / N2 / NCFM).